The chain runs to 1111 residues: MPHDGHEPPQRIIRLIAVGAGITGLLLCAVVPLLPVKQTTATIRWPQSATRDGWVTQITAPLVSGTPRALDISIPCSAMATLPDSVGLVVSTLPSGGVDTGKSGLFVRANKNAVVVAFRDSVAAVAPRPAVAAGNCSVLHIWANTRGAGANFVGIPGAAGILTAEKKPQVGGIFTDLKVPVQPGLSAHIDIDTRFITAPTAIKKIAVGVGAAAVLIAILALSALDRRNRNGHRLINWRVSMAWLAQWRVILATPPRAGGASRIADGGVLATLLLWHIIGATSSDDGYNLTVARVSSEAGYLANYYRYFGATEAPFDWYFTVLAKLASVSTAGVWMRIPATLAGIACWLIINHWVLRRLGPGTGGLSTNRVAVLTAGAMFLAAWLPFNNGLRPEPLIALGVLFTWVLVERAIALRRLASAATAAVVAILTATLAPQGLIAIAALLTGARAITQTIRRRRTTDGLLAPLLVLAASLSLITLVVFHSQTLATVGESARIKYKVGPTIACYQDFLRYYFLTVESNADGSMTRRFPVLVLLLCMFGVLVVLLRRSRVPGLASGPTWRLIGTTATSLLLLTFTPTKWAIQFGALAGLTGTFGAIAAFAFARISLHTRRNLTVYITALLFVLAWATAGINGWFGVSNYGVPWFDIQPVIAGHPVTSIFLTLSILTGLLAGGQHFRLDYAKHTEVKDTRRNRFLATTPLVVVATTMVLCEVGSLAKGAVARYPLYTTAKANLAALRSGLAPSVCAMADDVLTEPDPNAGMLQPVPGQIFGPTGPLGGMNPIGFKPEGVNDDLKSDPVVSKPGLVNSDASPNKPNVTFSDSAGTAGGKGPVGVNGSHVALPFGLDPDRTPVMGSYGENTLAASATSAWYQLPLHWKESIADRPLVVVSAAGAIWSYKEDGNFIYGQSLKLQWGVTRPDGIIQPLAQVMPIDIGPQPAWRNLRFPLTWAPPEANVARVVAYDPNLSPDQWLAFTPPRVPVLQTLQQLLGSQTPVLMDIATAANFPCQRPFSEHLGIAELPQYRILPDHKQTAASSNLWQSSEAGGPFLFLQALLRTSTISTYLRDDWYRDWGSVEQYYRLVPADQAPEAVVKQGMITVPGWIRRGPIRALP.

Helical transmembrane passes span isoleucine 12–leucine 34, isoleucine 205–leucine 224, valine 333–leucine 355, valine 370–asparagine 387, proline 394–leucine 413, alanine 423–threonine 445, glycine 462–serine 484, phenylalanine 530–leucine 547, glycine 554–phenylalanine 576, tryptophan 581–phenylalanine 603, threonine 615–glycine 637, isoleucine 652–glycine 674, and phenylalanine 695–alanine 717. Positions glycine 804–proline 831 are disordered. The segment covering serine 808–alanine 823 has biased composition (polar residues).

This sequence belongs to the emb family.

The protein resides in the cell membrane. Functionally, arabinosyl transferase responsible for the polymerization of arabinose into the arabinan of arabinogalactan. In Mycobacterium leprae (strain TN), this protein is Probable arabinosyltransferase A (embA).